We begin with the raw amino-acid sequence, 224 residues long: Transposase for insertion sequence-like element IS431mec (224 aa).

The segment at residues 33–52 (EILRERGVNVHHSTVYRWVQ) is a DNA-binding region (H-T-H motif). Residues 73-222 (WRIDETYIKI…SPCHEISIML (150 aa)) enclose the Integrase catalytic domain.

Its function is as follows. Involved in the transposition of the insertion sequence. In Staphylococcus aureus (strain NCTC 8325 / PS 47), this protein is Transposase for insertion sequence-like element IS431mec (tnp).